The sequence spans 264 residues: MKAVVLAVAVLFLTGSQARHFWQRDEPQTPWDRVKDFATVYVDAIKESGRDYVAQLETSVLGKHLNLKLLDNWDTLSTTFSKLRADLGPVTQEFWDNLEKDTEWLRQEMNKDLQEVKQKVQPYLDNFHKKMQEEMERYREKVGPLGTELREGARQKLQELQEKLTPLGEDLRDRAREHVDTLRTQLAPYSDDMRQRLTQRLEALRDSTTFADYQAKASEHLKTFSEKAKPALEDLRQGLLPVLESLKASILSSIDQATKQLTAQ.

Residues 1–18 (MKAVVLAVAVLFLTGSQA) form the signal peptide. Tandem repeats lie at residues 67–88 (LKLL…ADLG) and 89–110 (PVTQ…QEMN). A 10 X approximate tandem repeats region spans residues 67-264 (LKLLDNWDTL…DQATKQLTAQ (198 aa)). M109 is subject to Methionine sulfoxide. A 3; half-length repeat occupies 111–121 (KDLQEVKQKVQ). 5 tandem repeats follow at residues 122 to 143 (PYLD…EKVG), 144 to 165 (PLGT…EKLT), 166 to 187 (PLGE…TQLA), 188 to 207 (PYSD…LRDS), and 208 to 229 (TTFA…EKAK). The stretch at 230–240 (PALEDLRQGLL) is one 9; half-length repeat. Repeat unit 10 spans residues 241 to 264 (PVLESLKASILSSIDQATKQLTAQ).

It belongs to the apolipoprotein A1/A4/E family. As to quaternary structure, homodimer. Interacts with APOA1BP and CLU. Component of a sperm activating protein complex (SPAP), consisting of APOA1, an immunoglobulin heavy chain, an immunoglobulin light chain and albumin. Interacts with NDRG1. Interacts with SCGB3A2. Interacts with NAXE and YJEFN3. In terms of processing, glycosylated. Post-translationally, palmitoylated. Phosphorylation sites are present in the extracellular medium.

Its subcellular location is the secreted. Its function is as follows. Participates in the reverse transport of cholesterol from tissues to the liver for excretion by promoting cholesterol efflux from tissues and by acting as a cofactor for the lecithin cholesterol acyltransferase (LCAT). As part of the SPAP complex, activates spermatozoa motility. This is Apolipoprotein A-I (APOA1) from Chinchilla lanigera (Long-tailed chinchilla).